The sequence spans 123 residues: Small ribosomal subunit protein uS12 (123 aa).

Position 89 is a 3-methylthioaspartic acid (D89). The segment at 101–123 (SLDTAGVKDRKQSRSKYGAKRPK) is disordered. Basic residues predominate over residues 113–123 (SRSKYGAKRPK).

Belongs to the universal ribosomal protein uS12 family. As to quaternary structure, part of the 30S ribosomal subunit. Contacts proteins S8 and S17. May interact with IF1 in the 30S initiation complex.

Functionally, with S4 and S5 plays an important role in translational accuracy. In terms of biological role, interacts with and stabilizes bases of the 16S rRNA that are involved in tRNA selection in the A site and with the mRNA backbone. Located at the interface of the 30S and 50S subunits, it traverses the body of the 30S subunit contacting proteins on the other side and probably holding the rRNA structure together. The combined cluster of proteins S8, S12 and S17 appears to hold together the shoulder and platform of the 30S subunit. The chain is Small ribosomal subunit protein uS12 from Laribacter hongkongensis (strain HLHK9).